The sequence spans 273 residues: Pantothenate synthetase (273 aa).

Position 27–34 (Met27–His34) interacts with ATP. The Proton donor role is filled by His34. Position 58 (Gln58) interacts with (R)-pantoate. Gln58 is a beta-alanine binding site. Position 144 to 147 (Gly144 to Asp147) interacts with ATP. Gln150 is a (R)-pantoate binding site. ATP-binding positions include Val173 and Leu181–Arg184.

The protein belongs to the pantothenate synthetase family. Homodimer.

It localises to the cytoplasm. The catalysed reaction is (R)-pantoate + beta-alanine + ATP = (R)-pantothenate + AMP + diphosphate + H(+). Its pathway is cofactor biosynthesis; (R)-pantothenate biosynthesis; (R)-pantothenate from (R)-pantoate and beta-alanine: step 1/1. In terms of biological role, catalyzes the condensation of pantoate with beta-alanine in an ATP-dependent reaction via a pantoyl-adenylate intermediate. The sequence is that of Pantothenate synthetase from Campylobacter fetus subsp. fetus (strain 82-40).